The sequence spans 515 residues: E3 ubiquitin-protein ligase RNF217 (515 aa).

Disordered regions lie at residues 1–125 and 147–189; these read MGEE…VLAQ and PEAP…ADPL. Residues 10 to 22 are compositionally biased toward gly residues; it reads GSGGARASGGGSA. Composition is skewed to low complexity over residues 39 to 49 and 147 to 157; these read GPRAAASSSRP and PEAPSAESPSP. Pro residues predominate over residues 158-178; it reads SESPPQAPLGPIPASPPPSFP. Over residues 179–189 the composition is skewed to low complexity; it reads SSPLSLPADPL. The TRIAD supradomain stretch occupies residues 232 to 451; it reads MVLMCRVCLE…LSIFGCKYRY (220 aa). Cys-236, Cys-239, Cys-256, Cys-259, Cys-356, Cys-359, His-364, Cys-369, Cys-396, and Cys-399 together coordinate Zn(2+). The segment at 236 to 282 adopts an RING-type 1 zinc-finger fold; that stretch reads CRVCLEDKPIKPLPCCKKAVCEECLKIYLSSQVQLGQVEIKCPVTEC. The IBR-type zinc finger occupies 301-369; sequence IKYKYFLELG…HSPWHEGVNC (69 aa). The segment at 396–425 adopts an RING-type 2; atypical zinc-finger fold; sequence CPKCKIHIQRTEGCDHMTCSQCNTNFCYRC. Cys-409 is an active-site residue. Zn(2+) contacts are provided by Cys-414, Cys-417, Cys-422, Cys-425, His-438, and Cys-447. The chain crosses the membrane as a helical span at residues 476-496; it reads LILVLGLALGAIAVVIGLFVF.

It belongs to the RBR family. RNF217 subfamily. As to quaternary structure, interacts with HAX1.

The protein localises to the membrane. It is found in the cytoplasm. It carries out the reaction [E2 ubiquitin-conjugating enzyme]-S-ubiquitinyl-L-cysteine + [acceptor protein]-L-lysine = [E2 ubiquitin-conjugating enzyme]-L-cysteine + [acceptor protein]-N(6)-ubiquitinyl-L-lysine.. The protein operates within protein modification; protein ubiquitination. Its function is as follows. E3 ubiquitin-protein ligase which accepts ubiquitin from E2 ubiquitin-conjugating enzymes in the form of a thioester and then directly transfers the ubiquitin to targeted substrates. Mediates the degradation of the iron exporter ferroportin/SLC40A1 and thus regulates iron homeostasis. The chain is E3 ubiquitin-protein ligase RNF217 (Rnf217) from Mus musculus (Mouse).